An 83-amino-acid polypeptide reads, in one-letter code: Putative beta-neurotoxin RjAa10f (83 aa).

The first 18 residues, 1–18 (MKILIFIIASFMLIGVWC), serve as a signal peptide directing secretion. One can recognise an LCN-type CS-alpha/beta domain in the interval 19–82 (KEGYPMGRDG…VWDPNNNKCV (64 aa)). Disulfide bonds link Cys-29–Cys-81, Cys-33–Cys-55, Cys-40–Cys-62, and Cys-44–Cys-64.

This sequence belongs to the long (4 C-C) scorpion toxin superfamily. Sodium channel inhibitor family. Beta subfamily. In terms of tissue distribution, expressed by the venom gland.

The protein resides in the secreted. Functionally, beta toxins bind voltage-independently at site-4 of sodium channels (Nav) and shift the voltage of activation toward more negative potentials thereby affecting sodium channel activation and promoting spontaneous and repetitive firing. This chain is Putative beta-neurotoxin RjAa10f, found in Rhopalurus junceus (Caribbean blue scorpion).